The chain runs to 253 residues: DNA repair protein RecO (253 aa).

This sequence belongs to the RecO family.

Functionally, involved in DNA repair and RecF pathway recombination. This is DNA repair protein RecO from Dehalococcoides mccartyi (strain ATCC BAA-2100 / JCM 16839 / KCTC 5957 / BAV1).